The sequence spans 23 residues: Cysteine proteinase (23 aa).

The span at 1-10 (ADSLDWREKG) shows a compositional bias: basic and acidic residues. Residues 1-23 (ADSLDWREKGVVNSIKDQAQXGS) are disordered.

The protein belongs to the peptidase C1 family.

The sequence is that of Cysteine proteinase from Tritrichomonas foetus (Trichomonas foetus).